Reading from the N-terminus, the 141-residue chain is HTH-type transcriptional repressor NsrR (141 aa).

Residues 2 to 129 (QLTSFTDYGL…DSHTLADMVE (128 aa)) enclose the HTH rrf2-type domain. Residues 28–51 (ISEVTEVYGVSRNHMVKIINQLSR) constitute a DNA-binding region (H-T-H motif). [2Fe-2S] cluster contacts are provided by cysteine 91, cysteine 96, and cysteine 102.

[2Fe-2S] cluster serves as cofactor.

Its function is as follows. Nitric oxide-sensitive repressor of genes involved in protecting the cell against nitrosative stress. May require iron for activity. The polypeptide is HTH-type transcriptional repressor NsrR (Serratia proteamaculans (strain 568)).